Reading from the N-terminus, the 183-residue chain is Inosine/xanthosine triphosphatase (183 aa).

Mg(2+) is bound at residue aspartate 75. Residue 75–76 (DG) participates in substrate binding.

It belongs to the YjjX NTPase family. Homodimer. Mg(2+) serves as cofactor. The cofactor is Mn(2+).

The catalysed reaction is XTP + H2O = XDP + phosphate + H(+). The enzyme catalyses ITP + H2O = IDP + phosphate + H(+). Its function is as follows. Phosphatase that hydrolyzes non-canonical purine nucleotides such as XTP and ITP to their respective diphosphate derivatives. Probably excludes non-canonical purines from DNA/RNA precursor pool, thus preventing their incorporation into DNA/RNA and avoiding chromosomal lesions. The sequence is that of Inosine/xanthosine triphosphatase from Vibrio vulnificus (strain YJ016).